The sequence spans 67 residues: DNA-directed RNA polymerase subunit omega (67 aa).

This sequence belongs to the RNA polymerase subunit omega family. The RNAP catalytic core consists of 2 alpha, 1 beta, 1 beta' and 1 omega subunit. When a sigma factor is associated with the core the holoenzyme is formed, which can initiate transcription.

It carries out the reaction RNA(n) + a ribonucleoside 5'-triphosphate = RNA(n+1) + diphosphate. Promotes RNA polymerase assembly. Latches the N- and C-terminal regions of the beta' subunit thereby facilitating its interaction with the beta and alpha subunits. This chain is DNA-directed RNA polymerase subunit omega, found in Exiguobacterium sibiricum (strain DSM 17290 / CCUG 55495 / CIP 109462 / JCM 13490 / 255-15).